The chain runs to 403 residues: Aspartic endopeptidase PEP1 (403 aa).

The signal sequence occupies residues 1-20 (MVQISQIGAVLAVCSTLTVA). A propeptide spans 21–67 (APTKGKARFNVPQVAVPMKAVHHPAVAYARALHKFGMKVPKAVSDAA) (activation peptide). The 319-residue stretch at 82–400 (YVTQVTVGQG…DTEGPRIGFA (319 aa)) folds into the Peptidase A1 domain. Aspartate 98 is a catalytic residue. Residues asparagine 159 and asparagine 270 are each glycosylated (N-linked (GlcNAc...) asparagine). Residue aspartate 293 is part of the active site. An intrachain disulfide couples cysteine 329 to cysteine 361.

This sequence belongs to the peptidase A1 family.

It localises to the secreted. It carries out the reaction Hydrolysis of proteins with broad specificity. Generally favors hydrophobic residues in P1 and P1', but also accepts Lys in P1, which leads to activation of trypsinogen. Does not clot milk.. Secreted aspartic endopeptidase that allows assimilation of proteinaceous substrates. Can catalyze hydrolysis of the major structural proteins of basement membrane, elastin, collagen, and laminin. Thought to play a significant role in virulence. In terms of biological role, can catalyze hydrolysis of the major structural proteins of basement membrane, elastin, collagen, and laminin. Thought to play a significant role in virulence. The chain is Aspartic endopeptidase PEP1 (PEP1) from Trichophyton verrucosum (strain HKI 0517).